We begin with the raw amino-acid sequence, 835 residues long: Toll-like receptor 4 (835 aa).

A signal peptide spans 1–25; that stretch reads MMPLLHLAGTLIMALFLSCLRPGSL. The Extracellular segment spans residues 26–638; that stretch reads NPCIEVLPNI…KTIISVSVVS (613 aa). Cys28 and Cys39 are oxidised to a cystine. N-linked (GlcNAc...) asparagine glycosylation is found at Asn34, Asn43, and Asn75. LRR repeat units lie at residues 54 to 75, 78 to 99, 102 to 123, 126 to 147, and 150 to 171; these read STKNLDLSFNPLKILRSYSFTN, QLQWLDLSRCEIETIEDKAWHG, QLSTLVLTGNPIKSFSPGSFSG, NLENLVAVETKMTSLEGFHIGQ, and SLKKLNVAHNLIHSFKLPEYFS. N-linked (GlcNAc...) asparagine glycosylation is present at Asn172. LRR repeat units lie at residues 175 to 198, 204 to 224, and 226 to 247; these read NLEHVDLSYNYIQTISVKDLQFLR, NLSLDLSLNPIDSIQAQAFQG, and RLHELTLRSNFNSSNVLKMCLQ. 5 N-linked (GlcNAc...) asparagine glycosylation sites follow: Asn204, Asn237, Asn248, Asn281, and Asn307. A disulfide bridge connects residues Cys280 and Cys304. The stretch at 372 to 381 is one LRR 9 repeat; it reads SLRYLDLSRN. Cys388 and Cys389 are joined by a disulfide. LRR repeat units follow at residues 398–420, 421–442, 446–467, and 470–491; these read NLKYLDLSFNGVILMSANFMGLE, ELEYLDFQHSTLKKVTEFSVFL, KLLYLDISYTNTKIDFDGIFLG, and SLNTLKMAGNSFKDNTLSNVFT. Asn492, Asn495, and Asn524 each carry an N-linked (GlcNAc...) asparagine glycan. 3 LRR repeats span residues 495-516, 519-540, and 543-564; these read NLTFLDLSKCQLEQISRGVFDT, RLQLLNMSHNNLLFLDPSHYKQ, and SLRTLDCSFNRIETSKGILQHF. Residues Asn572 and Asn575 are each glycosylated (N-linked (GlcNAc...) asparagine). The 52-residue stretch at 576-627 folds into the LRRCT domain; sequence NSVACICEYQNFLQWVKDQKMFLVNVEQMKCASPIDMKASLVLDFTNSTCYI. 2 disulfide bridges follow: Cys580/Cys606 and Cys582/Cys625. An N-linked (GlcNAc...) asparagine glycan is attached at Asn622. The helical transmembrane segment at 639 to 659 threads the bilayer; sequence VLVVATVAFLIYHFYFHLILI. Residues 660–835 lie on the Cytoplasmic side of the membrane; sequence AGCKKYSRGE…EEEQEATTLT (176 aa). The 144-residue stretch at 670-813 folds into the TIR domain; that stretch reads SIYDAFVIYS…IFWRRLKKAL (144 aa).

It belongs to the Toll-like receptor family. As to quaternary structure, belongs to the lipopolysaccharide (LPS) receptor, a multi-protein complex containing at least CD14, LY96 and TLR4. Binding to bacterial LPS leads to homodimerization. Interacts with LY96 via the extracellular domain. Interacts with MYD88 and TIRAP via their respective TIR domains. Interacts with TICAM2. Interacts with NOX4. Interacts with CNPY3 and HSP90B1; this interaction is required for proper folding in the endoplasmic reticulum. Interacts with MAP3K21; this interaction leads to negative regulation of TLR4 signaling. Interacts with CD36, following CD36 stimulation by oxLDL or amyloid-beta 42, and forms a heterodimer with TLR6. The trimeric complex is internalized and triggers inflammatory response. LYN kinase activity facilitates TLR4-TLR6 heterodimerization and signal initiation. Interacts with TICAM1 in response to LPS in a WDFY1-dependent manner. Interacts with WDFY1 in response to LPS. Interacts with SMPDL3B. Interacts with CEACAM1; upon lipopolysaccharide stimulation, forms a complex including TLR4 and the phosphorylated form of SYK and CEACAM1, which in turn, recruits PTPN6 that dephosphorylates SYK, reducing the production of reactive oxygen species (ROS) and lysosome disruption, which in turn, reduces the activity of the inflammasome. Interacts with RFTN1; the interaction occurs in response to lipopolysaccharide stimulation. Interacts with SCIMP; the interaction occurs in response to lipopolysaccharide stimulation and is enhanced by phosphorylation of SCIMP by LYN. This interaction facilitates the phosphorylation of TLR4 by LYN which elicits a selective cytokine response in macrophages. Interacts with TRAF3IP3. Interacts with TREM1; this interaction enhances TLR4-mediated inflammatory response. Interacts with ZG16B/PAUF. Interacts with CD82; this interaction inhibits TLR4-mediated signaling pathway. In terms of processing, phosphorylated on tyrosine residues by LYN after binding lipopolysaccharide. Ubiquitinated by RNF128 via 'Lys-28'-linked polyubiquitin chains, leading to proteasomal degradation.

Its subcellular location is the cell membrane. It localises to the early endosome. It is found in the cell projection. The protein resides in the ruffle. Transmembrane receptor that functions as a pattern recognition receptor recognizing pathogen- and damage-associated molecular patterns (PAMPs and DAMPs) to induce innate immune responses via downstream signaling pathways. At the plasma membrane, cooperates with LY96 to mediate the innate immune response to bacterial lipopolysaccharide (LPS). Also involved in LPS-independent inflammatory responses triggered by free fatty acids, such as palmitate, and Ni(2+). Mechanistically, acts via MYD88, TIRAP and TRAF6, leading to NF-kappa-B activation, cytokine secretion and the inflammatory response. Alternatively, CD14-mediated TLR4 internalization via endocytosis is associated with the initiation of a MYD88-independent signaling via the TICAM1-TBK1-IRF3 axis leading to type I interferon production. In addition to the secretion of proinflammatory cytokines, initiates the activation of NLRP3 inflammasome and formation of a positive feedback loop between autophagy and NF-kappa-B signaling cascade. In complex with TLR6, promotes inflammation in monocytes/macrophages by associating with TLR6 and the receptor CD86. Upon ligand binding, such as oxLDL or amyloid-beta 42, the TLR4:TLR6 complex is internalized and triggers inflammatory response, leading to NF-kappa-B-dependent production of CXCL1, CXCL2 and CCL9 cytokines, via MYD88 signaling pathway, and CCL5 cytokine, via TICAM1 signaling pathway. In myeloid dendritic cells, vesicular stomatitis virus glycoprotein G but not LPS promotes the activation of IRF7, leading to type I IFN production in a CD14-dependent manner. The protein is Toll-like receptor 4 (Tlr4) of Rattus norvegicus (Rat).